The sequence spans 625 residues: Chaperone protein HtpG (625 aa).

The segment at 1–332 is a; substrate-binding; it reads MSKKTNAPVQ…TEDLSLNVSR (332 aa). The interval 333–545 is b; sequence EVVQSSPVMA…KDAMDSQMER (213 aa). Residues 546–625 form a c region; the sequence is MMKMMQQEMP…ELIEAATLSR (80 aa).

This sequence belongs to the heat shock protein 90 family. As to quaternary structure, homodimer.

The protein localises to the cytoplasm. Molecular chaperone. Has ATPase activity. The protein is Chaperone protein HtpG of Chlorobium phaeovibrioides (strain DSM 265 / 1930) (Prosthecochloris vibrioformis (strain DSM 265)).